Here is a 162-residue protein sequence, read N- to C-terminus: MEIKEIKVGIADMNTAGSPHRLITIGLGSCVGIALYDKVKGIGGLAHIMLPDSTQFSNIKNPVKFADLAVPLLIKDLEKLGVNKRNLKAKIAGGASMFNFSDKSMIMDIGNRNSAAVKKILEKCSVPILSEDLGGNKGRTMIFDTSQGGVKIRTVGMGIKEI.

Belongs to the CheD family.

The catalysed reaction is L-glutaminyl-[protein] + H2O = L-glutamyl-[protein] + NH4(+). Probably deamidates glutamine residues to glutamate on methyl-accepting chemotaxis receptors (MCPs), playing an important role in chemotaxis. The polypeptide is Probable chemoreceptor glutamine deamidase CheD (Clostridium kluyveri (strain ATCC 8527 / DSM 555 / NBRC 12016 / NCIMB 10680 / K1)).